A 352-amino-acid chain; its full sequence is tRNA-specific 2-thiouridylase MnmA (352 aa).

ATP-binding positions include 7 to 14 and Leu33; that span reads GLSGGVDS. The active-site Nucleophile is Cys94. Residues Cys94 and Cys193 are joined by a disulfide bond. ATP is bound at residue Gly119. Positions 143 to 145 are interaction with tRNA; the sequence is KDQ. Residue Cys193 is the Cysteine persulfide intermediate of the active site. The tract at residues 298 to 299 is interaction with tRNA; sequence RY.

It belongs to the MnmA/TRMU family.

It is found in the cytoplasm. The catalysed reaction is S-sulfanyl-L-cysteinyl-[protein] + uridine(34) in tRNA + AH2 + ATP = 2-thiouridine(34) in tRNA + L-cysteinyl-[protein] + A + AMP + diphosphate + H(+). Functionally, catalyzes the 2-thiolation of uridine at the wobble position (U34) of tRNA, leading to the formation of s(2)U34. In Trichormus variabilis (strain ATCC 29413 / PCC 7937) (Anabaena variabilis), this protein is tRNA-specific 2-thiouridylase MnmA.